A 279-amino-acid chain; its full sequence is Pantothenate synthetase (279 aa).

An ATP-binding site is contributed by 26-33; sequence MGNLHEGH. Catalysis depends on H33, which acts as the Proton donor. A (R)-pantoate-binding site is contributed by Q57. Q57 provides a ligand contact to beta-alanine. 144-147 provides a ligand contact to ATP; sequence GKKD. Q150 contacts (R)-pantoate. Residues V173 and 181–184 each bind ATP; that span reads LSSR.

It belongs to the pantothenate synthetase family. In terms of assembly, homodimer.

Its subcellular location is the cytoplasm. The enzyme catalyses (R)-pantoate + beta-alanine + ATP = (R)-pantothenate + AMP + diphosphate + H(+). It participates in cofactor biosynthesis; (R)-pantothenate biosynthesis; (R)-pantothenate from (R)-pantoate and beta-alanine: step 1/1. Its function is as follows. Catalyzes the condensation of pantoate with beta-alanine in an ATP-dependent reaction via a pantoyl-adenylate intermediate. The chain is Pantothenate synthetase from Burkholderia cenocepacia (strain ATCC BAA-245 / DSM 16553 / LMG 16656 / NCTC 13227 / J2315 / CF5610) (Burkholderia cepacia (strain J2315)).